Reading from the N-terminus, the 310-residue chain is Methionyl-tRNA formyltransferase (310 aa).

(6S)-5,6,7,8-tetrahydrofolate is bound at residue 109-112 (SLLP).

Belongs to the Fmt family.

It carries out the reaction L-methionyl-tRNA(fMet) + (6R)-10-formyltetrahydrofolate = N-formyl-L-methionyl-tRNA(fMet) + (6S)-5,6,7,8-tetrahydrofolate + H(+). Functionally, attaches a formyl group to the free amino group of methionyl-tRNA(fMet). The formyl group appears to play a dual role in the initiator identity of N-formylmethionyl-tRNA by promoting its recognition by IF2 and preventing the misappropriation of this tRNA by the elongation apparatus. This is Methionyl-tRNA formyltransferase from Agathobacter rectalis (strain ATCC 33656 / DSM 3377 / JCM 17463 / KCTC 5835 / VPI 0990) (Eubacterium rectale).